A 528-amino-acid chain; its full sequence is Ladinin-1 (528 aa).

The disordered stretch occupies residues 1–404; it reads MSVSRKDWSA…NSETPLTRSA (404 aa). Phosphoserine is present on residues Ser-38, Ser-56, Ser-62, Ser-72, and Ser-76. Positions 88–97 are enriched in basic residues; that stretch reads RTRKERRQRR. Ser-119 bears the Phosphoserine mark. The span at 134-173 shows a compositional bias: basic and acidic residues; that stretch reads KKVEALPRRRLSREQRGPWAQDEERLKNRELAEGEKRLPE. SEK repeat units lie at residues 184-186, 190-192, 202-204, and 208-210; these read SEK. Residues 184-281 form a 6 X SEK repeats region; that stretch reads SEKTPVSEKT…MQERKLVSEK (98 aa). 2 stretches are compositionally biased toward basic and acidic residues: residues 218–231 and 267–279; these read SLTE…KLVP and IVSE…KLVS. SEK repeat units lie at residues 269–271 and 279–281; these read SEK. The segment covering 304-316 has biased composition (polar residues); it reads EQPQTTGGSQATT. A phosphoserine mark is found at Ser-328, Ser-358, Ser-367, Ser-405, and Ser-496. Positions 365–377 are enriched in low complexity; that stretch reads TPSPTLLTYSSSL. A disordered region spans residues 492–528; the sequence is KTQDSGDHGSQEVRKEASVTKRAQWGSKPSTSLDAEV. Positions 495-510 are enriched in basic and acidic residues; sequence DSGDHGSQEVRKEASV. The span at 518-528 shows a compositional bias: polar residues; it reads SKPSTSLDAEV.

In terms of tissue distribution, expressed in kidney, lung and keratinocytes followed by liver, spleen and brain. Not expressed in testis, skeletal and heart muscle and in fibroblasts.

The protein localises to the secreted. Its subcellular location is the extracellular space. It localises to the extracellular matrix. It is found in the basement membrane. Its function is as follows. Anchoring filament protein which is a component of the basement membrane zone. In Mus musculus (Mouse), this protein is Ladinin-1 (Lad1).